Reading from the N-terminus, the 206-residue chain is Glycerol-3-phosphate acyltransferase (206 aa).

The next 5 membrane-spanning stretches (helical) occupy residues 14–34 (IALA…GLIL), 67–87 (ATLL…GYFL), 91–111 (AAII…WIGF), 124–144 (LLGV…AVAV), and 148–168 (YSSL…LILG).

Belongs to the PlsY family. In terms of assembly, probably interacts with PlsX.

The protein resides in the cell inner membrane. It carries out the reaction an acyl phosphate + sn-glycerol 3-phosphate = a 1-acyl-sn-glycero-3-phosphate + phosphate. The protein operates within lipid metabolism; phospholipid metabolism. Functionally, catalyzes the transfer of an acyl group from acyl-phosphate (acyl-PO(4)) to glycerol-3-phosphate (G3P) to form lysophosphatidic acid (LPA). This enzyme utilizes acyl-phosphate as fatty acyl donor, but not acyl-CoA or acyl-ACP. The sequence is that of Glycerol-3-phosphate acyltransferase from Rhizobium etli (strain ATCC 51251 / DSM 11541 / JCM 21823 / NBRC 15573 / CFN 42).